The primary structure comprises 572 residues: Flagellin A (572 aa).

Belongs to the bacterial flagellin family. In terms of assembly, heteromer of FlaA and FlaB. Interacts with FliW.

The protein localises to the secreted. It is found in the bacterial flagellum. Flagellin is the subunit protein which polymerizes to form the filaments of bacterial flagella. FlaA binds to flagellar assembly factor FliW protein, preventing FliW from binding to CsrA, so that CsrA can then bind flaA mRNA and represses its translation. The protein is Flagellin A (flaA) of Campylobacter jejuni subsp. jejuni serotype O:2 (strain ATCC 700819 / NCTC 11168).